A 458-amino-acid polypeptide reads, in one-letter code: Ammonium transporter Rh type B (458 aa).

The Cytoplasmic portion of the chain corresponds to 1-13 (MAGSPSRAAGRRL). Residues 14 to 34 (QLPLLCLFLQGATAVLFAVFV) form a helical membrane-spanning segment. The Extracellular portion of the chain corresponds to 35–61 (RYNHKTDAALWHRSNHSNADNEFYFRY). The N-linked (GlcNAc...) asparagine glycan is linked to Asn-49. Residues 62 to 82 (PSFQDVHAMVFVGFGFLMVFL) traverse the membrane as a helical segment. Residues 83–86 (QRYG) are Cytoplasmic-facing. The helical transmembrane segment at 87–107 (FSSVGFTFLLAAFALQWSTLV) threads the bilayer. Residues 108–124 (QGFLHSFHGGHIHVGVE) are Extracellular-facing. Residues 125–145 (SMINADFCAGAVLISFGAVLG) form a helical membrane-spanning segment. Over 146 to 149 (KTGP) the chain is Cytoplasmic. A helical transmembrane segment spans residues 150–170 (TQLLLMALLEVVLFGINEFVL). The Extracellular segment spans residues 171 to 178 (LHLLGVRD). The helical transmembrane segment at 179–201 (AGGSMTIHTFGAYFGLVLSRVLY) threads the bilayer. The Cytoplasmic portion of the chain corresponds to 202–219 (RPQLEKSKHRQGSVYHSD). Residues 220–240 (LFAMIGTIFLWIFWPSFNAAL) traverse the membrane as a helical segment. Topologically, residues 241–251 (TALGAGQHRTA) are extracellular. Residues 252 to 272 (LNTYYSLAASTLGTFALSALV) traverse the membrane as a helical segment. The Cytoplasmic segment spans residues 273–282 (GEDGRLDMVH). A helical transmembrane segment spans residues 283–303 (IQNAALAGGVVVGTSSEMMLT). Residue Pro-304 is a topological domain, extracellular. A helical transmembrane segment spans residues 305-325 (FGALAAGFLAGTVSTLGYKFF). Residues 326–346 (TPILESKFKVQDTCGVHNLHG) are Cytoplasmic-facing. A helical transmembrane segment spans residues 347–367 (MPGVLGALLGVLVAGLATHEA). The Extracellular portion of the chain corresponds to 368 to 393 (YGDGLESVFPLIAEGQRSATSQAMHQ). Residues 394 to 414 (LFGLFVTLMFASVGGGLGGLL) form a helical membrane-spanning segment. Over 415 to 458 (LKLPFLDSPPDSQHYEDQVHWQVPGEHEDKAQRPLRVEEADTQA) the chain is Cytoplasmic. The tract at residues 416-424 (KLPFLDSPP) is interaction with ANK3. The tract at residues 436 to 458 (QVPGEHEDKAQRPLRVEEADTQA) is disordered.

It belongs to the ammonium transporter (TC 2.A.49) family. Rh subfamily. In terms of assembly, interacts (via C-terminus) with ANK2 and ANK3; required for targeting to the basolateral membrane. N-glycosylated. As to expression, specifically expressed in kidney. Also detected in liver and ovary.

It is found in the cell membrane. Its subcellular location is the basolateral cell membrane. The enzyme catalyses NH4(+)(in) = NH4(+)(out). The catalysed reaction is methylamine(out) = methylamine(in). It catalyses the reaction CO2(out) = CO2(in). Ammonium transporter involved in the maintenance of acid-base homeostasis. Transports ammonium and its related derivative methylammonium across the basolateral plasma membrane of epithelial cells likely contributing to renal transepithelial ammonia transport and ammonia metabolism. May transport either NH4(+) or NH3 ammonia species predominantly mediating an electrogenic NH4(+) transport. May act as a CO2 channel providing for renal acid secretion. In Homo sapiens (Human), this protein is Ammonium transporter Rh type B.